The sequence spans 361 residues: Peptide chain release factor 1 (361 aa).

The residue at position 237 (Gln-237) is an N5-methylglutamine. Positions Ala-286 to Ser-306 are disordered.

This sequence belongs to the prokaryotic/mitochondrial release factor family. In terms of processing, methylated by PrmC. Methylation increases the termination efficiency of RF1.

It is found in the cytoplasm. Its function is as follows. Peptide chain release factor 1 directs the termination of translation in response to the peptide chain termination codons UAG and UAA. The polypeptide is Peptide chain release factor 1 (Coxiella burnetii (strain CbuK_Q154) (Coxiella burnetii (strain Q154))).